Here is a 128-residue protein sequence, read N- to C-terminus: Small ribosomal subunit protein bS6 (128 aa).

The protein belongs to the bacterial ribosomal protein bS6 family.

In terms of biological role, binds together with bS18 to 16S ribosomal RNA. This chain is Small ribosomal subunit protein bS6 (rpsF), found in Thermotoga maritima (strain ATCC 43589 / DSM 3109 / JCM 10099 / NBRC 100826 / MSB8).